Reading from the N-terminus, the 504-residue chain is CDK5 regulatory subunit-associated protein 3 (504 aa).

3 short sequence motifs (shuffled ATG8-binding motif) span residues 266–269 (IDWG), 290–293 (IDWG), and 308–311 (IDWG). A required for interaction with UFL1 and mediates interaction with CHEK1 region spans residues 268–504 (WGDFGLEAVS…RPVNLMGTSV (237 aa)). The RPL10a-binding domain (RBD) stretch occupies residues 353–368 (DELMELEIFLSQRAVE). Lysine 448 participates in a covalent cross-link: Glycyl lysine isopeptide (Lys-Gly) (interchain with G-Cter in SUMO2).

The protein belongs to the CDK5RAP3 family. In terms of assembly, substrate adapter component of the UFM1 ribosome E3 ligase (UREL) complex, composed of UFL1, DDRGK1 and CDK5RAP3. Interaction with UFL1 anchors CDK5RAP3 in the cytoplasm, preventing its translocation to the nucleus which allows expression of the CCND1 cyclin and progression of cells through the G1/S transition. Interacts with ATG8 family proteins MAP1LC3A, MAP1LC3B, GABARAP, GABARAPL1 and GABARAPL2. Interacts with CDK5R1; competes with CDK5RAP1 and CDK5RAP2. Interacts with RELA. Interacts with CHEK1; may negatively regulate CHEK1 and thereby stimulate entry into mitosis. Interacts with CDKN2A/ARF and MDM2; forms a ternary complex involved in regulation of p53/TP53. Interacts with MAPK14. Interacts with CCNB1. Interacts with TUBG1; may regulate CDK5RAP3 in mitotic G2/M transition checkpoint. May be phosphorylated by CDK5. Post-translationally, ubiquitinated. Probably triggers proteasomal degradation and is negatively regulated by UFL1. In terms of processing, may be ufmylated. Cleaved by caspases early during apoptosis, the resulting peptides may play a role in rupture of the nuclear envelope. As to expression, expressed in vascular endothelium. Up-regulated in failing heart. Highly expressed in the ventricular section in subacute and chronic ischemic heart failure.

It is found in the endoplasmic reticulum membrane. The protein resides in the cytoplasm. It localises to the nucleus. The protein localises to the cytoskeleton. Its subcellular location is the microtubule organizing center. It is found in the centrosome. In terms of biological role, substrate adapter of E3 ligase complexes mediating ufmylation, the covalent attachment of the ubiquitin-like modifier UFM1 to substrate proteins, and which is involved in various processes, such as ribosome recycling and reticulophagy (also called ER-phagy). As part of the UREL complex, plays a key role in ribosome recycling by promoting mono-ufmylation of RPL26/uL24 subunit of the 60S ribosome. Ufmylation of RPL26/uL24 occurs on free 60S ribosomes following ribosome dissociation: it weakens the junction between post-termination 60S subunits and SEC61 translocons, promoting release and recycling of the large ribosomal subunit from the endoplasmic reticulum membrane. Ufmylation of RPL26/uL24 and subsequent 60S ribosome recycling either take place after normal termination of translation or after ribosome stalling during cotranslational translocation at the endoplasmic reticulum. Within the UREL complex, CDK5RAP3 acts as a substrate adapter that constrains UFL1 ligase activity to mono-ufmylate RPL26/uL24 at 'Lys-134'. The UREL complex is also involved in reticulophagy in response to endoplasmic reticulum stress by promoting ufmylation of proteins such as CYB5R3, thereby promoting lysosomal degradation of ufmylated proteins. Also acts as a regulator of transcription: negatively regulates NF-kappa-B-mediated gene transcription through the control of RELA phosphorylation. Also regulates mitotic G2/M transition checkpoint and mitotic G2 DNA damage checkpoint. Through its interaction with CDKN2A/ARF and MDM2 may induce MDM2-dependent p53/TP53 ubiquitination, stabilization and activation in the nucleus, thereby promoting G1 cell cycle arrest and inhibition of cell proliferation. May also play a role in the rupture of the nuclear envelope during apoptosis. May regulate MAPK14 activity by regulating its dephosphorylation by PPM1D/WIP1. Required for liver development. The polypeptide is CDK5 regulatory subunit-associated protein 3 (Rattus norvegicus (Rat)).